We begin with the raw amino-acid sequence, 89 residues long: Small ribosomal subunit protein uS15c (89 aa).

Belongs to the universal ribosomal protein uS15 family. In terms of assembly, part of the 30S ribosomal subunit.

The protein resides in the plastid. The polypeptide is Small ribosomal subunit protein uS15c (rps15) (Aneura mirabilis (Parasitic liverwort)).